The chain runs to 160 residues: MSLATLDTAQHPSLPSASETLFKAKAAKKLSFEQIAQHIGRNEVATAAIFYGQAKASPEDIEKLSGLLTIPYDALEERLSGFPDRGRSVEMPPKEPLIYRLYEIVQNYGYAYKAVLNEKFGDGIMSAISFSTKVEKETDADGNNWAVITLRGKWLPFSRF.

Residues arginine 100, glutamate 103, and serine 126 contribute to the active site.

It belongs to the cyanase family.

It carries out the reaction cyanate + hydrogencarbonate + 3 H(+) = NH4(+) + 2 CO2. Its function is as follows. Catalyzes the reaction of cyanate with bicarbonate to produce ammonia and carbon dioxide. The sequence is that of Cyanate hydratase from Aspergillus niger (strain ATCC MYA-4892 / CBS 513.88 / FGSC A1513).